The sequence spans 179 residues: Endoribonuclease YbeY (179 aa).

Zn(2+) contacts are provided by histidine 148, histidine 152, and histidine 158.

Belongs to the endoribonuclease YbeY family. Requires Zn(2+) as cofactor.

The protein localises to the cytoplasm. In terms of biological role, single strand-specific metallo-endoribonuclease involved in late-stage 70S ribosome quality control and in maturation of the 3' terminus of the 16S rRNA. This is Endoribonuclease YbeY from Prochlorococcus marinus (strain MIT 9312).